The chain runs to 520 residues: Kelch domain-containing protein 4 (520 aa).

The segment covering 1-10 has biased composition (basic residues); sequence MGKKGKKEKK. The segment at 1–33 is disordered; the sequence is MGKKGKKEKKGRGAEKTAAKMEKKVSKRSRKEE. Residues 11–24 are compositionally biased toward basic and acidic residues; the sequence is GRGAEKTAAKMEKK. Kelch repeat units lie at residues 77–129, 133–187, 188–241, 243–289, and 308–361; these read ELIL…VVPQ, QLWV…AWKR, QLIL…VTPQ, GIVV…MNPS, and QTLF…RRGR. 3 disordered regions span residues 346 to 379, 402 to 431, and 481 to 520; these read QLKG…AGTQ, LTAP…GPCP, and DPET…GAED. Ser-413 and Ser-418 each carry phosphoserine. Residues 443–494 form a Kelch 6 repeat; it reads VLYVYGGMFEAGDRQVTLSDLHCLDLHRMEAWKALVEMDPETQEWLEETDSE.

This Homo sapiens (Human) protein is Kelch domain-containing protein 4 (KLHDC4).